The sequence spans 230 residues: U2 small nuclear ribonucleoprotein A' (230 aa).

LRR repeat units lie at residues 15–36 (SLRN…NADT), 48–69 (GDRE…GVTE), 71–92 (HYTS…PRLE), 93–114 (TLRT…KNIA), and 115–136 (KLET…ESLK). The LRRCT domain occupies 149–187 (NPVQHVPRYRSYMISILPSLRMLDFQRVTQKERDEAEAM).

Belongs to the U2 small nuclear ribonucleoprotein A family. As to quaternary structure, associated with the spliceosome.

It is found in the nucleus. Involved in pre-mRNA splicing. The sequence is that of U2 small nuclear ribonucleoprotein A' (LEA1) from Yarrowia lipolytica (strain CLIB 122 / E 150) (Yeast).